The chain runs to 301 residues: tRNA dimethylallyltransferase (301 aa).

8–15 is a binding site for ATP; that stretch reads GPTAVGKT. A substrate-binding site is contributed by 10–15; sequence TAVGKT. Positions 33–36 are interaction with substrate tRNA; sequence DSRQ.

This sequence belongs to the IPP transferase family. Monomer. The cofactor is Mg(2+).

The catalysed reaction is adenosine(37) in tRNA + dimethylallyl diphosphate = N(6)-dimethylallyladenosine(37) in tRNA + diphosphate. Functionally, catalyzes the transfer of a dimethylallyl group onto the adenine at position 37 in tRNAs that read codons beginning with uridine, leading to the formation of N6-(dimethylallyl)adenosine (i(6)A). This chain is tRNA dimethylallyltransferase, found in Thermosipho melanesiensis (strain DSM 12029 / CIP 104789 / BI429).